A 488-amino-acid polypeptide reads, in one-letter code: Glutamyl-tRNA(Gln) amidotransferase subunit A (488 aa).

Residues K77 and S152 each act as charge relay system in the active site. S176 (acyl-ester intermediate) is an active-site residue.

The protein belongs to the amidase family. GatA subfamily. In terms of assembly, heterotrimer of A, B and C subunits.

The enzyme catalyses L-glutamyl-tRNA(Gln) + L-glutamine + ATP + H2O = L-glutaminyl-tRNA(Gln) + L-glutamate + ADP + phosphate + H(+). In terms of biological role, allows the formation of correctly charged Gln-tRNA(Gln) through the transamidation of misacylated Glu-tRNA(Gln) in organisms which lack glutaminyl-tRNA synthetase. The reaction takes place in the presence of glutamine and ATP through an activated gamma-phospho-Glu-tRNA(Gln). In Streptococcus pyogenes serotype M5 (strain Manfredo), this protein is Glutamyl-tRNA(Gln) amidotransferase subunit A.